The primary structure comprises 540 residues: 2-succinyl-5-enolpyruvyl-6-hydroxy-3-cyclohexene-1-carboxylate synthase (540 aa).

It belongs to the TPP enzyme family. MenD subfamily. Homodimer. Requires Mg(2+) as cofactor. Mn(2+) is required as a cofactor. It depends on thiamine diphosphate as a cofactor.

The catalysed reaction is isochorismate + 2-oxoglutarate + H(+) = 5-enolpyruvoyl-6-hydroxy-2-succinyl-cyclohex-3-ene-1-carboxylate + CO2. It functions in the pathway quinol/quinone metabolism; 1,4-dihydroxy-2-naphthoate biosynthesis; 1,4-dihydroxy-2-naphthoate from chorismate: step 2/7. The protein operates within quinol/quinone metabolism; menaquinone biosynthesis. Functionally, catalyzes the thiamine diphosphate-dependent decarboxylation of 2-oxoglutarate and the subsequent addition of the resulting succinic semialdehyde-thiamine pyrophosphate anion to isochorismate to yield 2-succinyl-5-enolpyruvyl-6-hydroxy-3-cyclohexene-1-carboxylate (SEPHCHC). The chain is 2-succinyl-5-enolpyruvyl-6-hydroxy-3-cyclohexene-1-carboxylate synthase from Mycobacteroides abscessus (strain ATCC 19977 / DSM 44196 / CCUG 20993 / CIP 104536 / JCM 13569 / NCTC 13031 / TMC 1543 / L948) (Mycobacterium abscessus).